The primary structure comprises 1069 residues: Carbamoyl phosphate synthase large chain (1069 aa).

The interval 1 to 401 (MPLNKDIKKV…AFLKGIRSLE (401 aa)) is carboxyphosphate synthetic domain. Arg-129, Arg-169, Gly-175, Gly-176, Lys-208, Val-210, Glu-215, Gly-241, Ile-242, His-243, Gln-284, and Glu-298 together coordinate ATP. Residues 133 to 327 (RDMMNRIGEP…IAKLAAKIAL (195 aa)) form the ATP-grasp 1 domain. Mg(2+)-binding residues include Gln-284, Glu-298, and Asn-300. Mn(2+)-binding residues include Gln-284, Glu-298, and Asn-300. Residues 402 to 549 (IGKYSLDHKK…YSTYEQYDEV (148 aa)) form an oligomerization domain region. Residues 550-932 (EVSNRRKVIV…ALYKGFVGAN (383 aa)) are carbamoyl phosphate synthetic domain. In terms of domain architecture, ATP-grasp 2 spans 674 to 864 (DELLERLDIS…IVDIATQVMM (191 aa)). Residues Arg-710, Lys-749, Leu-751, Glu-755, Gly-780, Val-781, His-782, Ser-783, Gln-823, and Glu-835 each coordinate ATP. Gln-823, Glu-835, and Asn-837 together coordinate Mg(2+). Mn(2+) contacts are provided by Gln-823, Glu-835, and Asn-837. The MGS-like domain occupies 932 to 1069 (NMYPSKEKGK…KDLEVFDITK (138 aa)). An allosteric domain region spans residues 933–1069 (MYPSKEKGKI…KDLEVFDITK (137 aa)).

It belongs to the CarB family. In terms of assembly, composed of two chains; the small (or glutamine) chain promotes the hydrolysis of glutamine to ammonia, which is used by the large (or ammonia) chain to synthesize carbamoyl phosphate. Tetramer of heterodimers (alpha,beta)4. Mg(2+) serves as cofactor. The cofactor is Mn(2+).

The enzyme catalyses hydrogencarbonate + L-glutamine + 2 ATP + H2O = carbamoyl phosphate + L-glutamate + 2 ADP + phosphate + 2 H(+). The catalysed reaction is hydrogencarbonate + NH4(+) + 2 ATP = carbamoyl phosphate + 2 ADP + phosphate + 2 H(+). The protein operates within amino-acid biosynthesis; L-arginine biosynthesis; carbamoyl phosphate from bicarbonate: step 1/1. It functions in the pathway pyrimidine metabolism; UMP biosynthesis via de novo pathway; (S)-dihydroorotate from bicarbonate: step 1/3. In terms of biological role, large subunit of the glutamine-dependent carbamoyl phosphate synthetase (CPSase). CPSase catalyzes the formation of carbamoyl phosphate from the ammonia moiety of glutamine, carbonate, and phosphate donated by ATP, constituting the first step of 2 biosynthetic pathways, one leading to arginine and/or urea and the other to pyrimidine nucleotides. The large subunit (synthetase) binds the substrates ammonia (free or transferred from glutamine from the small subunit), hydrogencarbonate and ATP and carries out an ATP-coupled ligase reaction, activating hydrogencarbonate by forming carboxy phosphate which reacts with ammonia to form carbamoyl phosphate. This Clostridium botulinum (strain Eklund 17B / Type B) protein is Carbamoyl phosphate synthase large chain.